Consider the following 135-residue polypeptide: MIMGLENLKPAKGSVKKIKRVGRGQGSGMGKTATRGGKGQTARTGYKAKRGFEGGQQPLQRRLPKIGFRTKDSHIYSINVEKNEAIKNLEEITFSSLRALHHFPLYIEGVKLIGKDAKNLASKIKDERIKTSGQK.

Positions 21 to 66 are disordered; it reads VGRGQGSGMGKTATRGGKGQTARTGYKAKRGFEGGQQPLQRRLPKI.

The protein belongs to the universal ribosomal protein uL15 family. In terms of assembly, part of the 50S ribosomal subunit.

Functionally, binds to the 23S rRNA. The sequence is that of Large ribosomal subunit protein uL15 from Helicobacter pylori (strain HPAG1).